A 206-amino-acid polypeptide reads, in one-letter code: Putative type I restriction enzyme MpnIIP endonuclease subunit C-terminal part (206 aa).

In terms of biological role, the C-terminal section of a putative type I restriction enzyme that if reconstituted might recognize 5'-GAN(7)TAY-3' and cleave a random distance away. Subunit R is required for both nuclease and ATPase activities, but not for modification. This Mycoplasma pneumoniae (strain ATCC 29342 / M129 / Subtype 1) (Mycoplasmoides pneumoniae) protein is Putative type I restriction enzyme MpnIIP endonuclease subunit C-terminal part.